Here is a 1007-residue protein sequence, read N- to C-terminus: Protocadherin alpha-C2 (1007 aa).

The signal sequence occupies residues 1–42 (MEQAGTRPAATEHPRLRRPMPWLLLLPLLLLLLLLLPGPAAS). Cadherin domains lie at 43–148 (QLRY…SPRF), 149–257 (PRPN…SPAF), 258–365 (DQST…APEV), 374–469 (VPEN…PPSF), and 470–579 (LEDS…APHI). At 43-708 (QLRYSVPEEQ…RTYSEITLYL (666 aa)) the chain is on the extracellular side. Residues N280 and N436 are each glycosylated (N-linked (GlcNAc...) asparagine). N586 and N657 each carry an N-linked (GlcNAc...) asparagine glycan. Positions 594–691 (VPRTAPAGYL…DRVSKILPDT (98 aa)) constitute a Cadherin 6 domain. Residues 709-729 (IIALSTVSFIFLLTIIILSII) traverse the membrane as a helical segment. The Cytoplasmic portion of the chain corresponds to 730 to 1007 (KCYRYTAYGT…GNSTTDNSDQ (278 aa)). PXXP repeat units follow at residues 856–859 (PRQP), 889–892 (PGGP), 930–933 (PGNP), and 948–951 (PGSP). Residues 856 to 951 (PRQPNPDWRY…PDKFIIPGSP (96 aa)) form a 4 X 4 AA repeats of P-X-X-P region. Residues 885–1007 (LRAGPGGPDQ…GNSTTDNSDQ (123 aa)) are disordered. A compositionally biased stretch (basic and acidic residues) spans 966–980 (DKSDFITFGKKEETK).

Its subcellular location is the cell membrane. In terms of biological role, potential calcium-dependent cell-adhesion protein. May be involved in the establishment and maintenance of specific neuronal connections in the brain. The protein is Protocadherin alpha-C2 (PCDHAC2) of Homo sapiens (Human).